A 333-amino-acid polypeptide reads, in one-letter code: Fructose-1,6-bisphosphatase class 1 (333 aa).

The Mg(2+) site is built by Glu90, Asp112, Leu114, and Asp115. Residues 115-118, Asn207, and Lys273 contribute to the substrate site; that span reads DGSS. A Mg(2+)-binding site is contributed by Glu279.

It belongs to the FBPase class 1 family. As to quaternary structure, homotetramer. Mg(2+) is required as a cofactor.

The protein localises to the cytoplasm. The catalysed reaction is beta-D-fructose 1,6-bisphosphate + H2O = beta-D-fructose 6-phosphate + phosphate. The protein operates within carbohydrate biosynthesis; gluconeogenesis. The chain is Fructose-1,6-bisphosphatase class 1 from Aromatoleum aromaticum (strain DSM 19018 / LMG 30748 / EbN1) (Azoarcus sp. (strain EbN1)).